A 140-amino-acid chain; its full sequence is Nucleoside diphosphate kinase (140 aa).

The ATP site is built by lysine 11, phenylalanine 59, arginine 87, threonine 93, arginine 104, and asparagine 114. The active-site Pros-phosphohistidine intermediate is the histidine 117.

The protein belongs to the NDK family. Homotetramer. Mg(2+) is required as a cofactor.

The protein resides in the cytoplasm. The enzyme catalyses a 2'-deoxyribonucleoside 5'-diphosphate + ATP = a 2'-deoxyribonucleoside 5'-triphosphate + ADP. It catalyses the reaction a ribonucleoside 5'-diphosphate + ATP = a ribonucleoside 5'-triphosphate + ADP. Major role in the synthesis of nucleoside triphosphates other than ATP. The ATP gamma phosphate is transferred to the NDP beta phosphate via a ping-pong mechanism, using a phosphorylated active-site intermediate. The protein is Nucleoside diphosphate kinase of Rickettsia peacockii (strain Rustic).